Here is a 338-residue protein sequence, read N- to C-terminus: UDP-3-O-acylglucosamine N-acyltransferase (338 aa).

His-251 serves as the catalytic Proton acceptor.

It belongs to the transferase hexapeptide repeat family. LpxD subfamily. As to quaternary structure, homotrimer.

It catalyses the reaction a UDP-3-O-[(3R)-3-hydroxyacyl]-alpha-D-glucosamine + a (3R)-hydroxyacyl-[ACP] = a UDP-2-N,3-O-bis[(3R)-3-hydroxyacyl]-alpha-D-glucosamine + holo-[ACP] + H(+). Its pathway is bacterial outer membrane biogenesis; LPS lipid A biosynthesis. Functionally, catalyzes the N-acylation of UDP-3-O-acylglucosamine using 3-hydroxyacyl-ACP as the acyl donor. Is involved in the biosynthesis of lipid A, a phosphorylated glycolipid that anchors the lipopolysaccharide to the outer membrane of the cell. This Psychrobacter cryohalolentis (strain ATCC BAA-1226 / DSM 17306 / VKM B-2378 / K5) protein is UDP-3-O-acylglucosamine N-acyltransferase.